Here is a 546-residue protein sequence, read N- to C-terminus: uncharacterized protein (546 aa).

It belongs to the IIV-6 098R family.

This is an uncharacterized protein from Aedes vexans (Inland floodwater mosquito).